The chain runs to 152 residues: Ribosome maturation factor RimP (152 aa).

The protein belongs to the RimP family.

It localises to the cytoplasm. In terms of biological role, required for maturation of 30S ribosomal subunits. In Photorhabdus laumondii subsp. laumondii (strain DSM 15139 / CIP 105565 / TT01) (Photorhabdus luminescens subsp. laumondii), this protein is Ribosome maturation factor RimP.